We begin with the raw amino-acid sequence, 312 residues long: Zinc transporter ZitB (312 aa).

A run of 6 helical transmembrane segments spans residues 16–36 (LLIAFAITTLFMVTEAIGGWL), 40–60 (LALLADAGHMLTDSAALFIAL), 81–101 (LTTLAAFVNAAALLLIVILIV), 117–137 (TPMLIIAIAGLLANIFCFWIL), 153–173 (LHVLSDLLGSVGAMIAAIVIL), and 177–197 (WTPIDPILSVLVSVLILRSAW).

Belongs to the cation diffusion facilitator (CDF) transporter (TC 2.A.4) family. SLC30A subfamily.

Its subcellular location is the cell inner membrane. In terms of biological role, involved in zinc efflux across the cytoplasmic membrane, thus reducing zinc accumulation in the cytoplasm and rendering bacteria more resistant to zinc. It may contribute to zinc homeostasis at low concentrations of zinc. The protein is Zinc transporter ZitB of Yersinia pestis.